Here is a 474-residue protein sequence, read N- to C-terminus: Replication factor C large subunit (474 aa).

ATP is bound at residue 45–52 (GPPGCGKT). Basic and acidic residues predominate over residues 415 to 468 (DKKTNNKKGKENKTKNTTKKIKEIKETPKKEEVKEPKKQIEKQKSEKKEPKKQM). The tract at residues 415-474 (DKKTNNKKGKENKTKNTTKKIKEIKETPKKEEVKEPKKQIEKQKSEKKEPKKQMTLESFF) is disordered.

Belongs to the activator 1 small subunits family. RfcL subfamily. In terms of assembly, heteromultimer composed of small subunits (RfcS) and large subunits (RfcL).

In terms of biological role, part of the RFC clamp loader complex which loads the PCNA sliding clamp onto DNA. The sequence is that of Replication factor C large subunit from Methanococcus aeolicus (strain ATCC BAA-1280 / DSM 17508 / OCM 812 / Nankai-3).